The sequence spans 250 residues: tRNA (guanine-N(1)-)-methyltransferase (250 aa).

S-adenosyl-L-methionine-binding positions include Gly115 and Leu135 to Leu140.

This sequence belongs to the RNA methyltransferase TrmD family. Homodimer.

It is found in the cytoplasm. The enzyme catalyses guanosine(37) in tRNA + S-adenosyl-L-methionine = N(1)-methylguanosine(37) in tRNA + S-adenosyl-L-homocysteine + H(+). Specifically methylates guanosine-37 in various tRNAs. The sequence is that of tRNA (guanine-N(1)-)-methyltransferase from Legionella pneumophila subsp. pneumophila (strain Philadelphia 1 / ATCC 33152 / DSM 7513).